A 240-amino-acid chain; its full sequence is 4-hydroxy-tetrahydrodipicolinate reductase (240 aa).

NAD(+) contacts are provided by residues 79–81 (ATT) and 103–106 (SANM). Catalysis depends on H135, which acts as the Proton donor/acceptor. H136 is a binding site for (S)-2,3,4,5-tetrahydrodipicolinate. K139 acts as the Proton donor in catalysis. Residue 145-146 (GT) participates in (S)-2,3,4,5-tetrahydrodipicolinate binding.

The protein belongs to the DapB family.

It is found in the cytoplasm. The enzyme catalyses (S)-2,3,4,5-tetrahydrodipicolinate + NAD(+) + H2O = (2S,4S)-4-hydroxy-2,3,4,5-tetrahydrodipicolinate + NADH + H(+). It catalyses the reaction (S)-2,3,4,5-tetrahydrodipicolinate + NADP(+) + H2O = (2S,4S)-4-hydroxy-2,3,4,5-tetrahydrodipicolinate + NADPH + H(+). The protein operates within amino-acid biosynthesis; L-lysine biosynthesis via DAP pathway; (S)-tetrahydrodipicolinate from L-aspartate: step 4/4. Catalyzes the conversion of 4-hydroxy-tetrahydrodipicolinate (HTPA) to tetrahydrodipicolinate. This chain is 4-hydroxy-tetrahydrodipicolinate reductase, found in Staphylococcus aureus (strain USA300).